The primary structure comprises 305 residues: MATKNEEILRKPDWLKIKLNTNENYTGLKKMMREKNLNTVCEEAKCPNIHECWGARRTATFMILGAVCTRACRFCAVKTGLPNELDLNEPERVAESVELMNLKHVVITAVARDDLRDAGSNVYAETVRKVRERNPFTTIEILPSDMGGDYDALETLMASRPDILNHNIETVRRLTPRVRARATYDRTLEFLRRSKELQPDIPTKSSIMVGLGETIEEIYETMDDLRANDVDILTIGQYLQPSRKHLKVQKYYTPLEFGKLRKVAMDKGFKHCQAGPLVRSSYHADEQVNEAAKEKQRQGEAQLNS.

[4Fe-4S] cluster contacts are provided by C41, C46, C52, C68, C72, C75, and S281. The Radical SAM core domain occupies 54-270; that stretch reads GARRTATFMI…RKVAMDKGFK (217 aa). Residues 283-298 show a composition bias toward basic and acidic residues; that stretch reads HADEQVNEAAKEKQRQ. The interval 283–305 is disordered; that stretch reads HADEQVNEAAKEKQRQGEAQLNS.

Belongs to the radical SAM superfamily. Lipoyl synthase family. The cofactor is [4Fe-4S] cluster.

It is found in the cytoplasm. It carries out the reaction [[Fe-S] cluster scaffold protein carrying a second [4Fe-4S](2+) cluster] + N(6)-octanoyl-L-lysyl-[protein] + 2 oxidized [2Fe-2S]-[ferredoxin] + 2 S-adenosyl-L-methionine + 4 H(+) = [[Fe-S] cluster scaffold protein] + N(6)-[(R)-dihydrolipoyl]-L-lysyl-[protein] + 4 Fe(3+) + 2 hydrogen sulfide + 2 5'-deoxyadenosine + 2 L-methionine + 2 reduced [2Fe-2S]-[ferredoxin]. It participates in protein modification; protein lipoylation via endogenous pathway; protein N(6)-(lipoyl)lysine from octanoyl-[acyl-carrier-protein]. Its function is as follows. Catalyzes the radical-mediated insertion of two sulfur atoms into the C-6 and C-8 positions of the octanoyl moiety bound to the lipoyl domains of lipoate-dependent enzymes, thereby converting the octanoylated domains into lipoylated derivatives. The protein is Lipoyl synthase of Staphylococcus aureus (strain Mu3 / ATCC 700698).